A 312-amino-acid chain; its full sequence is Acetyl-coenzyme A carboxylase carboxyl transferase subunit alpha (312 aa).

The CoA carboxyltransferase C-terminal domain maps to 36 to 286 (NLEKEISKTY…ADYVKKSLNE (251 aa)).

Belongs to the AccA family. As to quaternary structure, acetyl-CoA carboxylase is a heterohexamer composed of biotin carboxyl carrier protein (AccB), biotin carboxylase (AccC) and two subunits each of ACCase subunit alpha (AccA) and ACCase subunit beta (AccD).

Its subcellular location is the cytoplasm. It catalyses the reaction N(6)-carboxybiotinyl-L-lysyl-[protein] + acetyl-CoA = N(6)-biotinyl-L-lysyl-[protein] + malonyl-CoA. It functions in the pathway lipid metabolism; malonyl-CoA biosynthesis; malonyl-CoA from acetyl-CoA: step 1/1. Its function is as follows. Component of the acetyl coenzyme A carboxylase (ACC) complex. First, biotin carboxylase catalyzes the carboxylation of biotin on its carrier protein (BCCP) and then the CO(2) group is transferred by the carboxyltransferase to acetyl-CoA to form malonyl-CoA. The protein is Acetyl-coenzyme A carboxylase carboxyl transferase subunit alpha of Campylobacter jejuni subsp. jejuni serotype O:23/36 (strain 81-176).